Here is a 618-residue protein sequence, read N- to C-terminus: Probable peptide transporter ptr2 (618 aa).

Position 22 is a phosphoserine (S22). Position 23 is a phosphotyrosine (Y23). Phosphoserine is present on residues S25 and S33. Positions 26 to 50 are disordered; it reads KEKKADGSATINTADEQSSTDELQK. A compositionally biased stretch (polar residues) spans 34 to 50; sequence ATINTADEQSSTDELQK. The residue at position 35 (T35) is a Phosphothreonine. S44 bears the Phosphoserine mark. T45 carries the post-translational modification Phosphothreonine. Phosphoserine occurs at positions 51 and 53. Residue T54 is modified to Phosphothreonine. 10 helical membrane-spanning segments follow: residues 131–151, 161–181, 187–207, 247–267, 273–293, 400–420, 430–450, 475–495, 510–530, and 541–561; these read GLSN…ALIA, IVCS…TAIP, GKSM…TGGI, YMIF…TTSL, FVYA…ILAV, FDSI…YPLL, ILRI…AAVL, VWIQ…ASIT, SIIT…SICI, and WMYT…WVCF. Position 594 is a phosphoserine (S594). T618 bears the Phosphothreonine mark.

Belongs to the major facilitator superfamily. Proton-dependent oligopeptide transporter (POT/PTR) (TC 2.A.17) family.

The protein localises to the membrane. Uptake of small peptides. The polypeptide is Probable peptide transporter ptr2 (ptr2) (Schizosaccharomyces pombe (strain 972 / ATCC 24843) (Fission yeast)).